Here is a 269-residue protein sequence, read N- to C-terminus: Novel plant SNARE 13 (269 aa).

Topologically, residues 1-217 are cytoplasmic; sequence MASNLPMSPQ…IGRQVATDKC (217 aa). The stretch at 33–94 forms a coiled coil; sequence DKIKDSTRQS…KQSMIKELNS (62 aa). Residue serine 74 is modified to Phosphoserine. The 63-residue stretch at 146–208 folds into the t-SNARE coiled-coil homology domain; the sequence is MKRMDETDQA…KKASQLVKEI (63 aa). Residues 218–238 traverse the membrane as a helical; Anchor for type IV membrane protein segment; it reads IMGFLFLIVCGVVAIIIVKIV. Residues 239–269 are Vesicular-facing; that stretch reads NPNNKDIRDIPGLAPPAQSRKLLYLRNQDYM.

Belongs to the novel plant SNARE family.

Its subcellular location is the membrane. In terms of biological role, vesicle trafficking protein that functions in the secretory pathway. In Arabidopsis thaliana (Mouse-ear cress), this protein is Novel plant SNARE 13 (NPSN13).